Consider the following 205-residue polypeptide: Regulator of G-protein signaling 4 (205 aa).

Residues Cys-2, Cys-12, and Cys-95 are each lipidated (S-palmitoyl cysteine). Residues 62–178 (SLENLISHEC…LKSRFYLDLV (117 aa)) enclose the RGS domain.

Post-translationally, palmitoylated on Cys-2 and/or Cys-12. In terms of processing, phosphorylated by cyclic GMP-dependent protein kinase.

Inhibits signal transduction by increasing the GTPase activity of G protein alpha subunits thereby driving them into their inactive GDP-bound form. Activity on G(z)-alpha is inhibited by phosphorylation of the G-protein. Activity on G(z)-alpha and G(i)-alpha-1 is inhibited by palmitoylation of the G-protein. The polypeptide is Regulator of G-protein signaling 4 (RGS4) (Bos taurus (Bovine)).